The following is a 341-amino-acid chain: Cathepsin B-like cysteine proteinase 1 (341 aa).

The signal sequence occupies residues 1–19 (MKYLFFALCLYLYQGISEA). The propeptide at 20 to 88 (EVPAEQIPLE…VEDEELEENN (69 aa)) is activation peptide. Asn103 carries an N-linked (GlcNAc...) asparagine glycan. Disulfide bonds link Cys104/Cys133, Cys116/Cys160, Cys152/Cys218, Cys153/Cys156, Cys189/Cys222, and Cys197/Cys209. Cys119 is a catalytic residue. N-linked (GlcNAc...) asparagine glycosylation is present at Asn202. Active-site residues include His288 and Asn308.

This sequence belongs to the peptidase C1 family.

In terms of biological role, expression of the protease correlates with blood-feeding and suggests a role for the protease in blood digestion. In Ostertagia ostertagi (Brown stomach worm), this protein is Cathepsin B-like cysteine proteinase 1 (CP-1).